Here is a 118-residue protein sequence, read N- to C-terminus: Large ribosomal subunit protein uL22 (118 aa).

Belongs to the universal ribosomal protein uL22 family. In terms of assembly, part of the 50S ribosomal subunit.

This protein binds specifically to 23S rRNA; its binding is stimulated by other ribosomal proteins, e.g. L4, L17, and L20. It is important during the early stages of 50S assembly. It makes multiple contacts with different domains of the 23S rRNA in the assembled 50S subunit and ribosome. Functionally, the globular domain of the protein is located near the polypeptide exit tunnel on the outside of the subunit, while an extended beta-hairpin is found that lines the wall of the exit tunnel in the center of the 70S ribosome. In Prosthecochloris aestuarii (strain DSM 271 / SK 413), this protein is Large ribosomal subunit protein uL22.